A 588-amino-acid polypeptide reads, in one-letter code: Succinate dehydrogenase flavoprotein subunit (588 aa).

Residues 14–19 (GAGGAG), 37–52 (SKVFPTRSHTVSAQGG), and D221 each bind FAD. At H45 the chain carries Tele-8alpha-FAD histidine. The substrate site is built by H242 and T254. The active-site Proton acceptor is the R286. Residue H354 coordinates substrate. E388 is an FAD binding site. R399 contacts substrate. FAD is bound at residue 404-405 (SL).

The protein belongs to the FAD-dependent oxidoreductase 2 family. FRD/SDH subfamily. Part of an enzyme complex containing four subunits: a flavoprotein, an iron-sulfur, cytochrome b-556, and a hydrophobic anchor protein. The cofactor is FAD.

The protein resides in the cell inner membrane. The catalysed reaction is a quinone + succinate = fumarate + a quinol. It participates in carbohydrate metabolism; tricarboxylic acid cycle; fumarate from succinate (bacterial route): step 1/1. In terms of biological role, two distinct, membrane-bound, FAD-containing enzymes are responsible for the catalysis of fumarate and succinate interconversion; the fumarate reductase is used in anaerobic growth, and the succinate dehydrogenase is used in aerobic growth. The sequence is that of Succinate dehydrogenase flavoprotein subunit (sdhA) from Salmonella typhimurium (strain LT2 / SGSC1412 / ATCC 700720).